We begin with the raw amino-acid sequence, 150 residues long: Large ribosomal subunit protein bL9 (150 aa).

Belongs to the bacterial ribosomal protein bL9 family.

Binds to the 23S rRNA. In Variovorax paradoxus (strain S110), this protein is Large ribosomal subunit protein bL9.